A 1032-amino-acid polypeptide reads, in one-letter code: MSFVELHCISNYSFLKGASHPEELVRQAIAQGYEGLAITDECSVAGAVKAWRELRRLRQEAPEASAFKLIIGSEFHYEGNCFVVLAPHKKAYGELCRFITDCRRKADKGDYQFSPDALNENIKQGLLLWRPKQSDQEFIPALTKIFSGRLWLLLELSLSEEDDSERELIQTLSSAYNLPVVSSNGVKMHAPERKRLHDALTAIRFNQSVDSIKDRLAPNAENYLRPLNEIHEIYPSFTIQESLRIAAKCAFELNEIRYQYPKEVVPEGDDPSAYLRRLTYEGAHLRYPQGIPENVLATLEKELNIISELQYEYYFLTIFDIVDYAKKSQILCQGRGSAANSVVCYCLGITAVDPTRASLLFERFISKGRDEPPDIDVDFENARREEVIQYLYRRYGRERCAIAATVITYRPKSAIRDLGKALGVDLLQLESVIANYGWRYRGQDWIDEVITPQVSQDNHILTCFKELLPELLGFPRHLSQHVGGFVLSAGPLVELVPIENAAMEDRTVIQWDKDDLESLGLMKVDVLALGMLTALKKCTTYISEITGKTFSLESIPKEEDSQVYDMLQRADTVGLFQVESRAQMNMLPRLRPEKYYDLVVQVAIVRPGPIHGDMVHPYLRRRHNLEDPDDVPLPELKPILKRTFGVPIFQEQVIAIAIVGAGFTSEEAEELRRSMASWKRRGHMGKLMDKLIINLLKKGVPLEYIQRLCRQIEGFGEYGFPESHAASFALLAYHSGWLKYYYPSAFCCALLNSQPMGFYAPWQVIQDAQRHGVIVLPVDINNSYWEHRLEPHSDNTKEGALRLGFRLVKGLSEEAACSIIQHRTDEGFTSLVQVMHLPKINREDLEALASANALASLGENRYQQRWECSGFLYYYQLFSECEYINIDFEPPSRLDNIYEDHSSTGVVLNDHPLAYLREANLTPQCLTAVELLKQKAGLKTYVAGVVINRQRPKTSTGVTFVTLEDETGSINILVWKKTAIAQMDILVKARLLMVYGELDKDEEGRVAHVLAHRLTDLTPHLEELESRSRDFH.

This sequence belongs to the DNA polymerase type-C family. DnaE2 subfamily.

It localises to the cytoplasm. The catalysed reaction is DNA(n) + a 2'-deoxyribonucleoside 5'-triphosphate = DNA(n+1) + diphosphate. Its function is as follows. DNA polymerase involved in damage-induced mutagenesis and translesion synthesis (TLS). It is not the major replicative DNA polymerase. The sequence is that of Error-prone DNA polymerase from Hahella chejuensis (strain KCTC 2396).